The primary structure comprises 594 residues: UvrABC system protein C (594 aa).

Residues 15 to 92 (DKPGCYQMKN…IQKFQPYYNI (78 aa)) form the GIY-YIG domain. The UVR domain occupies 197–232 (AKIKQSLQTKMQKASEAMEFERAADIRDQIHYIEVT).

The protein belongs to the UvrC family. As to quaternary structure, interacts with UvrB in an incision complex.

The protein resides in the cytoplasm. Functionally, the UvrABC repair system catalyzes the recognition and processing of DNA lesions. UvrC both incises the 5' and 3' sides of the lesion. The N-terminal half is responsible for the 3' incision and the C-terminal half is responsible for the 5' incision. The protein is UvrABC system protein C of Pediococcus pentosaceus (strain ATCC 25745 / CCUG 21536 / LMG 10740 / 183-1w).